We begin with the raw amino-acid sequence, 460 residues long: Beta-1,3-xylanase TXYA (460 aa).

The N-terminal stretch at 1-22 (MKKLAKMISVATLGACAFQAHA) is a signal peptide. Residues 23–337 (LDGKLVPDQG…LSDPKFIRHS (315 aa)) form the GH26 domain. The active-site Proton donor is glutamate 138. Glutamate 234 functions as the Nucleophile in the catalytic mechanism. Residues 347-371 (GNSDGGNGGDNGGDNGGDNGGETPE) are disordered. The span at 348 to 366 (NSDGGNGGDNGGDNGGDNG) shows a compositional bias: gly residues. The segment at 368–460 (ETPENCTDDF…TVTFTNQVCN (93 aa)) is carbohydrate binding module (CBM). 2 cysteine pairs are disulfide-bonded: cysteine 373/cysteine 459 and cysteine 404/cysteine 409.

It belongs to the glycosyl hydrolase 26 family.

The catalysed reaction is Random hydrolysis of (1-&gt;3)-beta-D-glycosidic linkages in (1-&gt;3)-beta-D-xylans.. Completely inhibited by Cu(2+), Hg(2+) and N-bromosuccinimide. Strongly inhibited by Ag(+), Zn(2+) and Pb(2+). Moderately inhibited by Fe(3+), Al(3+), Mn(2+), dithiothreitol and p-chloromercuribenzoic acid. Slightly activated by Mg(2+) and Ca(2+). Unaffected by Na(+), K(+), Ba(2+), EDTA, iodoacetic acid and N-ethylmalaimide. Catalyzes the hydrolysis of beta-1,3-xylan into oligosaccharides, mainly xylotriose and xylobiose with smaller amounts of xylotetraose, xylose, xylopentaose and xylohexaose. Weakly active toward beta-1,3-xylotriose, yielding xylose and xylobiose. Converts beta-1,3-xylotetraose into xylotriose, xylobiose and xylose. Converts beta-1,3-xylopentaose into xylotetraose, xylotriose, xylobiose and xylose. Does not hydrolyze xylobiose, p-nitrophenyl-beta-xyloside, beta-1,4-xylan, curdlan or carboxymethylcellulose. In Vibrio sp, this protein is Beta-1,3-xylanase TXYA.